Here is a 603-residue protein sequence, read N- to C-terminus: UPF0313 protein MJ1155 (603 aa).

Residues 285-557 (GIVPVQFSVV…KIQKAICLYR (273 aa)) form the Radical SAM core domain. Residues C299, C303, and C306 each contribute to the [4Fe-4S] cluster site.

This sequence belongs to the UPF0313 family. The cofactor is [4Fe-4S] cluster.

This is UPF0313 protein MJ1155 from Methanocaldococcus jannaschii (strain ATCC 43067 / DSM 2661 / JAL-1 / JCM 10045 / NBRC 100440) (Methanococcus jannaschii).